Here is a 230-residue protein sequence, read N- to C-terminus: Interleukin-6 (230 aa).

Residues 1 to 24 (MASKHNADLSSAAMLAALLLCALG) form the signal peptide. Cys96 and Cys106 are oxidised to a cystine. Residue Asn100 is glycosylated (N-linked (GlcNAc...) asparagine). Over residues 206 to 218 (REMPKQKRRKDDG) the composition is skewed to basic and acidic residues. The disordered stretch occupies residues 206-230 (REMPKQKRRKDDGIIPPIHPSYQMT).

The protein belongs to the IL-6 superfamily. In terms of assembly, component of a hexamer of two molecules each of IL6, IL6R and IL6ST; first binds to IL6R to associate with the signaling subunit IL6ST. Expressed in kidney and spleen. Low expression in liver and gills.

The protein resides in the secreted. Its function is as follows. Cytokine with a wide variety of biological functions in immunity, tissue regeneration, and metabolism. Binds to IL6R, then the complex associates to the signaling subunit IL6ST/gp130 to trigger the intracellular IL6-signaling pathway. The interaction with the membrane-bound IL6R and IL6ST stimulates 'classic signaling', whereas the binding of IL6 and soluble IL6R to IL6ST stimulates 'trans-signaling'. Alternatively, 'cluster signaling' occurs when membrane-bound IL6:IL6R complexes on transmitter cells activate IL6ST receptors on neighboring receiver cells. This Paralichthys olivaceus (Bastard halibut) protein is Interleukin-6 (il6).